The sequence spans 681 residues: 2-(S-pantetheinyl)-carbapenam-3-carboxylate methyltransferase (681 aa).

The B12-binding domain maps to 1–144; the sequence is MTVPAARSGR…IERLADHPDY (144 aa). Cob(II)alamin is bound by residues Asn18, Ser72, Tyr74, Val75, His103, Gly126, and Glu127. The 226-residue stretch at 192–417 folds into the Radical SAM core domain; sequence RDLRFYALWE…RLYVEEPGTP (226 aa). 2 residues coordinate [4Fe-4S] cluster: Cys206 and Cys210. A 5'-deoxyadenosine-binding site is contributed by Phe212. Position 213 (Cys213) interacts with [4Fe-4S] cluster. Cob(II)alamin-binding residues include Asp214 and Cys249. 5'-deoxyadenosine-binding residues include Gln312, Glu349, and Gly384.

It belongs to the methyltransferase superfamily. Requires [4Fe-4S] cluster as cofactor. Cob(II)alamin serves as cofactor.

It carries out the reaction (2R,3R,5S)-2-(S-pantetheinyl)-carbapenam-3-carboxylate + AH2 + 2 S-adenosyl-L-methionine = (2R,3R,5S,6R)-6-(methyl)-2-(S-pantetheinyl)-carbapenam-3-carboxylate + 5'-deoxyadenosine + L-methionine + A + S-adenosyl-L-homocysteine + 2 H(+). It catalyses the reaction (2R,3R,5S,6R)-6-(methyl)-2-(S-pantetheinyl)-carbapenam-3-carboxylate + AH2 + 2 S-adenosyl-L-methionine = (2R,3R,5S,6R)-6-(ethyl)-2-(S-pantetheinyl)-carbapenam-3-carboxylate + 5'-deoxyadenosine + L-methionine + A + S-adenosyl-L-homocysteine + 2 H(+). It functions in the pathway antibiotic biosynthesis. Methyltransferase involved in the biosynthesis of the beta-lactam carbapenem antibiotic thienamycin. Catalyzes two consecutive S-adenosyl-L-methionine-dependent methylations to build out the C6-ethyl side chain in a stereocontrolled manner. In vitro can use methyl viologen and NADPH as the iron-sulfur cluster reductants. The polypeptide is 2-(S-pantetheinyl)-carbapenam-3-carboxylate methyltransferase (Streptantibioticus cattleyicolor (strain ATCC 35852 / DSM 46488 / JCM 4925 / NBRC 14057 / NRRL 8057) (Streptomyces cattleya)).